Here is an 864-residue protein sequence, read N- to C-terminus: MSKSAVSPMMQQYLGIKAQHTDKLVFYRMGDFYEMFFDDAVEAAKLLDITLTTRGQVDGEPVKMAGVPFHAAEQYLARLVKLGKSVAICEQVGEVGAGKGPVERKVVRIVTPGTLTDSALLEDKETNRIVAVSPDKKYIGLAWASLQSGEFKTKLTTVDKLDDELARLQAAEILLPDSKNAPQLQTASGVTRLNAWQFAADAGEKLLTEYFGCQDLRGFGLDGKEHAVAIGAAGALLNYIRLTQNLMPQHLDGLSLETDSQYIGMDAATRRNLEITQTLSGKKSPTLMSTLDLCATHMGSRLLALWLHHPLRNRAHIRARQEAVAALESQYKPLQCRLKSIADIERIAARIAVGNARPRDLAALRDSLFALSEIELSAECSSLLGTLKAVFPENLSTAEQLRQAILPEPSVWLKDGNVINHGFHPELDELRRIQNHGDEFLLDLEAKERERTGLSTLKVEFNRVHGFYIELSKTQAEQAPADYQRRQTLKNAERFITPELKAFEDKVLTAQEQALALEKQLFDGVLKNLQTALPQLQKAAKAAAALDVLSTFSALAKERNFVRPEFADYPVIHIENGRHPVVEQQVRHFTANHTDLDHKHRLMLLTGPNMGGKSTYMRQVALIVLLAHTGCFVPADAATIGPIDQIFTRIGASDDLASNRSTFMVEMSETAYILHHATEQSLVLMDEVGRGTSTFDGLALAHAVAEHLLQKNKSFSLFATHYFELTYLPEAHTAAVNMHLSALEQGQDIVFLHQIQPGPAGKSYGIAVAKLAGLPVRALKSAQKHLNGLENQAAANRPQLDIFSTMPSEKGDEPNVGNFVDKAEEKHFEGILAAALEKLDPDSLTPREALSELYRLKDLCKSVS.

Residue 607–614 coordinates ATP; the sequence is GPNMGGKS.

It belongs to the DNA mismatch repair MutS family.

This protein is involved in the repair of mismatches in DNA. It is possible that it carries out the mismatch recognition step. This protein has a weak ATPase activity. This is DNA mismatch repair protein MutS from Neisseria meningitidis serogroup B (strain ATCC BAA-335 / MC58).